Reading from the N-terminus, the 37-residue chain is Large ribosomal subunit protein bL36 (37 aa).

This sequence belongs to the bacterial ribosomal protein bL36 family.

The sequence is that of Large ribosomal subunit protein bL36 from Vibrio atlanticus (strain LGP32) (Vibrio splendidus (strain Mel32)).